A 571-amino-acid chain; its full sequence is Acetolactate synthase large subunit (571 aa).

Glu51 provides a ligand contact to thiamine diphosphate. Residues Arg153, 261-282 (HGTYEANMAMHYSDVIFAIGVR), and 304-323 (DIDPTSISKTVSADIPIVGD) each bind FAD. Residues 394-474 (QHQMFTALYY…VLILNLNNSS (81 aa)) are thiamine pyrophosphate binding. Residues Asp445 and Asn472 each coordinate Mg(2+).

It belongs to the TPP enzyme family. Dimer of large and small chains. Mg(2+) serves as cofactor. Thiamine diphosphate is required as a cofactor.

The enzyme catalyses 2 pyruvate + H(+) = (2S)-2-acetolactate + CO2. The protein operates within amino-acid biosynthesis; L-isoleucine biosynthesis; L-isoleucine from 2-oxobutanoate: step 1/4. It participates in amino-acid biosynthesis; L-valine biosynthesis; L-valine from pyruvate: step 1/4. This is Acetolactate synthase large subunit (ilvI) from Buchnera aphidicola subsp. Schizaphis graminum (strain Sg).